We begin with the raw amino-acid sequence, 103 residues long: Pyrimidine/purine nucleoside phosphorylase (103 aa).

Belongs to the nucleoside phosphorylase PpnP family.

The enzyme catalyses a purine D-ribonucleoside + phosphate = a purine nucleobase + alpha-D-ribose 1-phosphate. The catalysed reaction is adenosine + phosphate = alpha-D-ribose 1-phosphate + adenine. It catalyses the reaction cytidine + phosphate = cytosine + alpha-D-ribose 1-phosphate. It carries out the reaction guanosine + phosphate = alpha-D-ribose 1-phosphate + guanine. The enzyme catalyses inosine + phosphate = alpha-D-ribose 1-phosphate + hypoxanthine. The catalysed reaction is thymidine + phosphate = 2-deoxy-alpha-D-ribose 1-phosphate + thymine. It catalyses the reaction uridine + phosphate = alpha-D-ribose 1-phosphate + uracil. It carries out the reaction xanthosine + phosphate = alpha-D-ribose 1-phosphate + xanthine. Catalyzes the phosphorolysis of diverse nucleosides, yielding D-ribose 1-phosphate and the respective free bases. Can use uridine, adenosine, guanosine, cytidine, thymidine, inosine and xanthosine as substrates. Also catalyzes the reverse reactions. This chain is Pyrimidine/purine nucleoside phosphorylase, found in Geobacter sp. (strain M21).